The chain runs to 31 residues: Protamine-Z (31 aa).

Residues 1-31 are disordered; that stretch reads ARRRRSRRASRPVRRRRPRRVSRRRRARRRR.

Testis.

It is found in the nucleus. The protein localises to the chromosome. Functionally, protamines substitute for histones in the chromatin of sperm during the haploid phase of spermatogenesis. They compact sperm DNA into a highly condensed, stable and inactive complex. The polypeptide is Protamine-Z (Clupea harengus (Atlantic herring)).